The chain runs to 242 residues: Biosynthetic peptidoglycan transglycosylase (242 aa).

Residues isoleucine 19–valine 39 form a helical membrane-spanning segment.

This sequence belongs to the glycosyltransferase 51 family.

The protein resides in the cell inner membrane. The catalysed reaction is [GlcNAc-(1-&gt;4)-Mur2Ac(oyl-L-Ala-gamma-D-Glu-L-Lys-D-Ala-D-Ala)](n)-di-trans,octa-cis-undecaprenyl diphosphate + beta-D-GlcNAc-(1-&gt;4)-Mur2Ac(oyl-L-Ala-gamma-D-Glu-L-Lys-D-Ala-D-Ala)-di-trans,octa-cis-undecaprenyl diphosphate = [GlcNAc-(1-&gt;4)-Mur2Ac(oyl-L-Ala-gamma-D-Glu-L-Lys-D-Ala-D-Ala)](n+1)-di-trans,octa-cis-undecaprenyl diphosphate + di-trans,octa-cis-undecaprenyl diphosphate + H(+). It functions in the pathway cell wall biogenesis; peptidoglycan biosynthesis. Peptidoglycan polymerase that catalyzes glycan chain elongation from lipid-linked precursors. The chain is Biosynthetic peptidoglycan transglycosylase from Salmonella typhi.